The chain runs to 179 residues: Large ribosomal subunit protein uL5 (179 aa).

This sequence belongs to the universal ribosomal protein uL5 family. Part of the 50S ribosomal subunit; part of the 5S rRNA/L5/L18/L25 subcomplex. Contacts the 5S rRNA and the P site tRNA. Forms a bridge to the 30S subunit in the 70S ribosome.

Functionally, this is one of the proteins that bind and probably mediate the attachment of the 5S RNA into the large ribosomal subunit, where it forms part of the central protuberance. In the 70S ribosome it contacts protein S13 of the 30S subunit (bridge B1b), connecting the 2 subunits; this bridge is implicated in subunit movement. Contacts the P site tRNA; the 5S rRNA and some of its associated proteins might help stabilize positioning of ribosome-bound tRNAs. This chain is Large ribosomal subunit protein uL5, found in Rickettsia prowazekii (strain Madrid E).